The sequence spans 189 residues: Nucleoside triphosphate pyrophosphatase (189 aa).

Asp70 serves as the catalytic Proton acceptor.

This sequence belongs to the Maf family. It depends on a divalent metal cation as a cofactor.

It is found in the cytoplasm. The enzyme catalyses a ribonucleoside 5'-triphosphate + H2O = a ribonucleoside 5'-phosphate + diphosphate + H(+). It carries out the reaction a 2'-deoxyribonucleoside 5'-triphosphate + H2O = a 2'-deoxyribonucleoside 5'-phosphate + diphosphate + H(+). Nucleoside triphosphate pyrophosphatase. May have a dual role in cell division arrest and in preventing the incorporation of modified nucleotides into cellular nucleic acids. This is Nucleoside triphosphate pyrophosphatase from Xylella fastidiosa (strain M23).